The chain runs to 111 residues: Photosystem II reaction center Psb28 protein (111 aa).

This sequence belongs to the Psb28 family. In terms of assembly, part of the photosystem II complex.

The protein localises to the cellular thylakoid membrane. This is Photosystem II reaction center Psb28 protein from Acaryochloris marina (strain MBIC 11017).